The chain runs to 775 residues: Serine/threonine-protein kinase-like protein CCR1 (775 aa).

The signal sequence occupies residues 1-23 (METRCSLLFLSLILLYLPKPGSG). At 24 to 439 (FGSSGPIAAS…DKHWHQLQRL (416 aa)) the chain is on the extracellular side. Residues N57, N102, N167, N213, N220, N241, N261, N292, N328, and N360 are each glycosylated (N-linked (GlcNAc...) asparagine). A TNFR-Cys repeat occupies 351-406 (PCNEKEFAFNASILNEPDLTSLCVRKELMVCSPCGSDCSHGFFLSSSCTANSDRIC). Intrachain disulfides connect C352-C381, C384-C398, and C388-C406. N414 is a glycosylation site (N-linked (GlcNAc...) asparagine). A helical transmembrane segment spans residues 440 to 460 (VLIIGSCASALLIIIIGCCVV). Residues 461-775 (PRIVTSPNKE…EHVARDALIF (315 aa)) are Cytoplasmic-facing. The 251-residue stretch at 520–770 (FKEFNELGRG…LANWLEHVAR (251 aa)) folds into the Protein kinase domain. ATP is bound by residues 526-534 (LGRGSYGFV) and K548. The active-site Proton acceptor is the D645.

It belongs to the protein kinase superfamily. Ser/Thr protein kinase family. In terms of assembly, homodimer. In terms of tissue distribution, expressed in roots, leaves, shoot apical meristems (SAM), and floral buds.

The protein localises to the membrane. The enzyme catalyses L-seryl-[protein] + ATP = O-phospho-L-seryl-[protein] + ADP + H(+). It catalyses the reaction L-threonyl-[protein] + ATP = O-phospho-L-threonyl-[protein] + ADP + H(+). Serine/threonine-protein kinase with low activity. The polypeptide is Serine/threonine-protein kinase-like protein CCR1 (CCR1) (Arabidopsis thaliana (Mouse-ear cress)).